The sequence spans 240 residues: Ditrans,polycis-undecaprenyl-diphosphate synthase ((2E,6E)-farnesyl-diphosphate specific) (240 aa).

Residue Asp18 is part of the active site. Mg(2+) is bound at residue Asp18. Substrate-binding positions include 19–22 (GNGR), Trp23, Arg31, His35, and 63–65 (SSE). Residue Asn66 is the Proton acceptor of the active site. Substrate-binding positions include Trp67, Arg69, Arg186, and 192–194 (RIS). Glu205 is a binding site for Mg(2+).

Belongs to the UPP synthase family. As to quaternary structure, homodimer. Mg(2+) is required as a cofactor.

The enzyme catalyses 8 isopentenyl diphosphate + (2E,6E)-farnesyl diphosphate = di-trans,octa-cis-undecaprenyl diphosphate + 8 diphosphate. Functionally, catalyzes the sequential condensation of isopentenyl diphosphate (IPP) with (2E,6E)-farnesyl diphosphate (E,E-FPP) to yield (2Z,6Z,10Z,14Z,18Z,22Z,26Z,30Z,34E,38E)-undecaprenyl diphosphate (di-trans,octa-cis-UPP). UPP is the precursor of glycosyl carrier lipid in the biosynthesis of bacterial cell wall polysaccharide components such as peptidoglycan and lipopolysaccharide. The polypeptide is Ditrans,polycis-undecaprenyl-diphosphate synthase ((2E,6E)-farnesyl-diphosphate specific) (Pasteurella multocida (strain Pm70)).